The sequence spans 283 residues: NFU1 iron-sulfur cluster scaffold homolog, mitochondrial (283 aa).

The transit peptide at 1–65 directs the protein to the mitochondrion; that stretch reads MSKFLSQAAI…ELRMPVACRR (65 aa). A nifU region spans residues 182 to 250; sequence IKELLDTRIR…IPEVESVEQV (69 aa). [4Fe-4S] cluster-binding residues include Cys219 and Cys222.

This sequence belongs to the NifU family.

The protein localises to the mitochondrion. Its function is as follows. Molecular scaffold for [Fe-S] cluster assembly of mitochondrial iron-sulfur proteins. The protein is NFU1 iron-sulfur cluster scaffold homolog, mitochondrial of Drosophila sechellia (Fruit fly).